Reading from the N-terminus, the 57-residue chain is Small ribosomal subunit protein eS27 (57 aa).

The Zn(2+) site is built by Cys10, Cys13, Cys29, and Cys32. The C4-type zinc finger occupies 10-32 (CDDCENEQVLFGKAANTVNCAVC).

It belongs to the eukaryotic ribosomal protein eS27 family. As to quaternary structure, part of the 30S ribosomal subunit. Requires Zn(2+) as cofactor.

The chain is Small ribosomal subunit protein eS27 from Natronomonas pharaonis (strain ATCC 35678 / DSM 2160 / CIP 103997 / JCM 8858 / NBRC 14720 / NCIMB 2260 / Gabara) (Halobacterium pharaonis).